The chain runs to 493 residues: Glutamyl-tRNA(Gln) amidotransferase subunit A (493 aa).

Catalysis depends on charge relay system residues Lys78 and Ser158. The active-site Acyl-ester intermediate is the Ser182.

This sequence belongs to the amidase family. GatA subfamily. In terms of assembly, heterotrimer of A, B and C subunits.

The enzyme catalyses L-glutamyl-tRNA(Gln) + L-glutamine + ATP + H2O = L-glutaminyl-tRNA(Gln) + L-glutamate + ADP + phosphate + H(+). Functionally, allows the formation of correctly charged Gln-tRNA(Gln) through the transamidation of misacylated Glu-tRNA(Gln) in organisms which lack glutaminyl-tRNA synthetase. The reaction takes place in the presence of glutamine and ATP through an activated gamma-phospho-Glu-tRNA(Gln). The polypeptide is Glutamyl-tRNA(Gln) amidotransferase subunit A (Rickettsia felis (strain ATCC VR-1525 / URRWXCal2) (Rickettsia azadi)).